A 229-amino-acid polypeptide reads, in one-letter code: Urease accessory protein UreG (229 aa).

24-31 (GPVGSGKT) lines the GTP pocket.

The protein belongs to the SIMIBI class G3E GTPase family. UreG subfamily. As to quaternary structure, homodimer. UreD, UreF and UreG form a complex that acts as a GTP-hydrolysis-dependent molecular chaperone, activating the urease apoprotein by helping to assemble the nickel containing metallocenter of UreC. The UreE protein probably delivers the nickel.

The protein localises to the cytoplasm. Functionally, facilitates the functional incorporation of the urease nickel metallocenter. This process requires GTP hydrolysis, probably effectuated by UreG. This Albidiferax ferrireducens (strain ATCC BAA-621 / DSM 15236 / T118) (Rhodoferax ferrireducens) protein is Urease accessory protein UreG.